We begin with the raw amino-acid sequence, 571 residues long: Proline--tRNA ligase (571 aa).

It belongs to the class-II aminoacyl-tRNA synthetase family. ProS type 1 subfamily. Homodimer.

Its subcellular location is the cytoplasm. The catalysed reaction is tRNA(Pro) + L-proline + ATP = L-prolyl-tRNA(Pro) + AMP + diphosphate. Catalyzes the attachment of proline to tRNA(Pro) in a two-step reaction: proline is first activated by ATP to form Pro-AMP and then transferred to the acceptor end of tRNA(Pro). As ProRS can inadvertently accommodate and process non-cognate amino acids such as alanine and cysteine, to avoid such errors it has two additional distinct editing activities against alanine. One activity is designated as 'pretransfer' editing and involves the tRNA(Pro)-independent hydrolysis of activated Ala-AMP. The other activity is designated 'posttransfer' editing and involves deacylation of mischarged Ala-tRNA(Pro). The misacylated Cys-tRNA(Pro) is not edited by ProRS. This Actinobacillus succinogenes (strain ATCC 55618 / DSM 22257 / CCUG 43843 / 130Z) protein is Proline--tRNA ligase.